The following is a 548-amino-acid chain: Phosphoglucomutase (548 aa).

S135 (phosphoserine intermediate) is an active-site residue. Mg(2+)-binding residues include S135, D288, D290, and D292.

This sequence belongs to the phosphohexose mutase family. Requires Mg(2+) as cofactor.

It carries out the reaction alpha-D-glucose 1-phosphate = alpha-D-glucose 6-phosphate. The protein operates within glycolipid metabolism; diglucosyl-diacylglycerol biosynthesis. Catalyzes the interconversion between glucose-6-phosphate and alpha-glucose-1-phosphate. This is the first step in the biosynthesis of diglucosyl-diacylglycerol (Glc2-DAG), i.e. a glycolipid found in the membrane, which is also used as a membrane anchor for lipoteichoic acid (LTA). This Staphylococcus haemolyticus (strain JCSC1435) protein is Phosphoglucomutase (pgcA).